Reading from the N-terminus, the 91-residue chain is Small ribosomal subunit protein uS19 (91 aa).

This sequence belongs to the universal ribosomal protein uS19 family.

Protein S19 forms a complex with S13 that binds strongly to the 16S ribosomal RNA. In Prochlorococcus marinus (strain MIT 9211), this protein is Small ribosomal subunit protein uS19.